An 833-amino-acid polypeptide reads, in one-letter code: Leucine--tRNA ligase (833 aa).

The 'HIGH' region motif lies at 41 to 52 (PYPSGAGLHVGH). The 'KMSKS' region motif lies at 610–614 (KMSKS). Lys-613 provides a ligand contact to ATP.

Belongs to the class-I aminoacyl-tRNA synthetase family.

It is found in the cytoplasm. It catalyses the reaction tRNA(Leu) + L-leucine + ATP = L-leucyl-tRNA(Leu) + AMP + diphosphate. The chain is Leucine--tRNA ligase from Streptococcus mutans serotype c (strain ATCC 700610 / UA159).